The chain runs to 505 residues: ATP synthase subunit beta, mitochondrial (505 aa).

An ATP-binding site is contributed by 184-191; the sequence is GGAGVGKT.

This sequence belongs to the ATPase alpha/beta chains family. F-type ATPases have 2 components, CF(1) - the catalytic core - and CF(0) - the membrane proton channel. CF(1) has five subunits: alpha(3), beta(3), gamma(1), delta(1), epsilon(1). CF(0) has three main subunits: a, b and c.

It is found in the mitochondrion. It localises to the mitochondrion inner membrane. The enzyme catalyses ATP + H2O + 4 H(+)(in) = ADP + phosphate + 5 H(+)(out). Its function is as follows. Mitochondrial membrane ATP synthase (F(1)F(0) ATP synthase or Complex V) produces ATP from ADP in the presence of a proton gradient across the membrane which is generated by electron transport complexes of the respiratory chain. F-type ATPases consist of two structural domains, F(1) - containing the extramembraneous catalytic core, and F(0) - containing the membrane proton channel, linked together by a central stalk and a peripheral stalk. During catalysis, ATP synthesis in the catalytic domain of F(1) is coupled via a rotary mechanism of the central stalk subunits to proton translocation. Subunits alpha and beta form the catalytic core in F(1). Rotation of the central stalk against the surrounding alpha(3)beta(3) subunits leads to hydrolysis of ATP in three separate catalytic sites on the beta subunits. The protein is ATP synthase subunit beta, mitochondrial (ATP2) of Kluyveromyces lactis (strain ATCC 8585 / CBS 2359 / DSM 70799 / NBRC 1267 / NRRL Y-1140 / WM37) (Yeast).